The chain runs to 629 residues: MALDGLAGYVYKAAAEGRVLTLAALLLHRTEPEIRTLLSTVTQHGGQRSTPLIIAARNGHSKVVRLLLEHYKVDVQQTGTVRFDGYIIDGATALWCAAGAGHYEVVKLLVSHEANVNHTTVTNSTPLRAACFDGRLDIVRFLVENNANISIANKYDNTCLMIAAYKGHSDVVHYLLRQHADPNARAHCGATALHFAAEAGHLDIVRELVKWKAAMVVNGHGMTPLKVAAESCKADVVELLLAHSDCDAKSRIEALELLGASFANDRENYNITKTYQYLYLAMLERFRDPSNILHKEVLPPIEAYGMRTECRNPQELGAILHNTDDLHLEGLIVRERILGSDNIDVSHPIIYRGAVYADNMQFEQCIKLWLHALQLRQKGNRNTHKDLLRFAQVFSQMIHLNEPVKSRDVERVLECSVLEIERGIARIQNPQEPDAHSTLENHECNLYTFLYLVCISTKTCCSEEEQPCINKQIYRLVHLDPRTREGGSLLHLAVDSGTPVDDFHTNDVCSFPSAPVAKLLIDCGANVNAVDQMGNSPLHVIVQYNRPISDFLTLHAIIISLVEAGAHTDMTNKEKKTPLDRSTTGVSEILLKTQMKLSLKCLAARAVRLHNIKYQNQIPRTLEEFVEFH.

ANK repeat units lie at residues 47-77 (QRST…DVQQ), 89-118 (DGAT…NVNH), 122-151 (TNST…NISI), 155-184 (YDNT…DPNA), 188-217 (CGAT…AMVV), and 220-250 (HGMT…DAKS). The stretch at 346–379 (SHPIIYRGAVYADNMQFEQCIKLWLHALQLRQKG) is one TPR repeat. 2 ANK repeats span residues 485–529 (EGGS…NVNA) and 533–570 (MGNS…HTDM).

This sequence belongs to the fem-1 family. As to quaternary structure, component of a CRL2 E3 ubiquitin-protein ligase complex, also named ECS (Elongin BC-CUL2/5-SOCS-box protein) complex.

It is found in the cytoplasm. The protein localises to the nucleus. It participates in protein modification; protein ubiquitination. In terms of biological role, substrate-recognition component of a Cul2-RING (CRL2) E3 ubiquitin-protein ligase complex of the DesCEND (destruction via C-end degrons) pathway, which recognizes a C-degron located at the extreme C terminus of target proteins, leading to their ubiquitination and degradation. The C-degron recognized by the DesCEND pathway is usually a motif of less than ten residues and can be present in full-length proteins, truncated proteins or proteolytically cleaved forms. The CRL2(FEM1B) complex specifically recognizes proteins ending with -Gly-Leu-Asp-Arg, leading to their ubiquitination and degradation. The polypeptide is Protein fem-1 homolog B (Xenopus laevis (African clawed frog)).